A 485-amino-acid chain; its full sequence is Cytochrome P450 monooxygenase tndB (485 aa).

The chain crosses the membrane as a helical span at residues 20-40 (VYGISAVIAVGLAIYSASLAI). C481 provides a ligand contact to heme.

This sequence belongs to the cytochrome P450 family. Heme serves as cofactor.

It localises to the membrane. It participates in secondary metabolite biosynthesis; terpenoid biosynthesis. Functionally, cytochrome P450 monooxygenase; part of the gene cluster that mediates the biosynthesis of talaronoid C, a fusicoccane diterpenoid with an unprecedented tricyclic 5/8/6 ring system. The first step in the pathway is performed by the fusicoccadiene synthase tndC that possesses both prenyl transferase and terpene cyclase activity, converting isopentenyl diphosphate and dimethylallyl diphosphate into geranylgeranyl diphosphate (GGDP) and further converting GGDP into talarodiene, a precursor for talaronoid C. The remaining enzymes from the cluster include the cytochrome P450 monooxygenase tndB, the aldehyde reductase tndE and the alcohol dehydrogenase tndF that are involved in the conversion of talarodiene into talaronoid C. This Aspergillus flavipes protein is Cytochrome P450 monooxygenase tndB.